Consider the following 249-residue polypeptide: 5'-nucleotidase SurE (249 aa).

Residues D8, D9, S39, and N91 each contribute to the a divalent metal cation site.

This sequence belongs to the SurE nucleotidase family. The cofactor is a divalent metal cation.

Its subcellular location is the cytoplasm. It catalyses the reaction a ribonucleoside 5'-phosphate + H2O = a ribonucleoside + phosphate. In terms of biological role, nucleotidase that shows phosphatase activity on nucleoside 5'-monophosphates. The sequence is that of 5'-nucleotidase SurE from Stutzerimonas stutzeri (strain A1501) (Pseudomonas stutzeri).